The following is a 393-amino-acid chain: Riboflavin biosynthesis protein RibBA (393 aa).

Positions 1-200 (MQFDTIELAI…IKSLVAFRKA (200 aa)) are DHBP synthase. Residues 27–28 (RE), aspartate 32, 139–143 (RNGHT), and glutamate 163 each bind D-ribulose 5-phosphate. Mg(2+) is bound at residue glutamate 28. Histidine 142 lines the Mg(2+) pocket. Residues 201–393 (VELNVNLKAK…TKKNKMGHLI (193 aa)) form a GTP cyclohydrolase II region. 249–253 (RMHSA) lines the GTP pocket. 3 residues coordinate Zn(2+): cysteine 254, cysteine 265, and cysteine 267. GTP contacts are provided by residues glutamine 270, 291–293 (EGR), and threonine 313. Aspartate 325 serves as the catalytic Proton acceptor; for GTP cyclohydrolase activity. Arginine 327 (nucleophile; for GTP cyclohydrolase activity) is an active-site residue. Residues serine 348 and lysine 353 each coordinate GTP.

In the N-terminal section; belongs to the DHBP synthase family. The protein in the C-terminal section; belongs to the GTP cyclohydrolase II family. The cofactor is Mg(2+). Mn(2+) is required as a cofactor. Requires Zn(2+) as cofactor.

The catalysed reaction is D-ribulose 5-phosphate = (2S)-2-hydroxy-3-oxobutyl phosphate + formate + H(+). It catalyses the reaction GTP + 4 H2O = 2,5-diamino-6-hydroxy-4-(5-phosphoribosylamino)-pyrimidine + formate + 2 phosphate + 3 H(+). The protein operates within cofactor biosynthesis; riboflavin biosynthesis; 2-hydroxy-3-oxobutyl phosphate from D-ribulose 5-phosphate: step 1/1. Its pathway is cofactor biosynthesis; riboflavin biosynthesis; 5-amino-6-(D-ribitylamino)uracil from GTP: step 1/4. Functionally, catalyzes the conversion of D-ribulose 5-phosphate to formate and 3,4-dihydroxy-2-butanone 4-phosphate. Its function is as follows. Catalyzes the conversion of GTP to 2,5-diamino-6-ribosylamino-4(3H)-pyrimidinone 5'-phosphate (DARP), formate and pyrophosphate. This chain is Riboflavin biosynthesis protein RibBA, found in Staphylococcus epidermidis (strain ATCC 12228 / FDA PCI 1200).